A 556-amino-acid chain; its full sequence is U-box domain-containing protein 38 (556 aa).

Residues 1-34 (MGKNGRLRWNPFSHRSSSSTSSSSRQQQQEQQPP) form a disordered region. Over residues 13–32 (SHRSSSSTSSSSRQQQQEQQ) the composition is skewed to low complexity. Positions 32 to 108 (QPPVEFLCPI…DTWCDTVGVS (77 aa)) constitute a U-box domain. ARM repeat units follow at residues 256–295 (DEAR…NLSL), 297–336 (KKNK…SLSL), 338–378 (DDNK…HLTL), 380–417 (QTNR…NLAC), and 418–468 (CSEG…ALSH).

Binds to SD16, SD17, SD18 and SD129.

The enzyme catalyses S-ubiquitinyl-[E2 ubiquitin-conjugating enzyme]-L-cysteine + [acceptor protein]-L-lysine = [E2 ubiquitin-conjugating enzyme]-L-cysteine + N(6)-ubiquitinyl-[acceptor protein]-L-lysine.. It participates in protein modification; protein ubiquitination. Functions as an E3 ubiquitin ligase. The protein is U-box domain-containing protein 38 (PUB38) of Arabidopsis thaliana (Mouse-ear cress).